The sequence spans 368 residues: 2-aminoethylphosphonate--pyruvate transaminase (368 aa).

Lys-192 is subject to N6-(pyridoxal phosphate)lysine.

Belongs to the class-V pyridoxal-phosphate-dependent aminotransferase family. PhnW subfamily. As to quaternary structure, homodimer. Pyridoxal 5'-phosphate is required as a cofactor.

The catalysed reaction is (2-aminoethyl)phosphonate + pyruvate = phosphonoacetaldehyde + L-alanine. In terms of biological role, involved in phosphonate degradation. The chain is 2-aminoethylphosphonate--pyruvate transaminase from Pseudomonas putida (strain GB-1).